Here is a 275-residue protein sequence, read N- to C-terminus: Formamidopyrimidine-DNA glycosylase (275 aa).

Residue P2 is the Schiff-base intermediate with DNA of the active site. E3 serves as the catalytic Proton donor. The active-site Proton donor; for beta-elimination activity is the K59. The DNA site is built by H93, R112, and R153. The FPG-type zinc finger occupies 238–272 (NVYDRVGKPCPRCQTAIERIVVAQRSTFFCPLCQV). The Proton donor; for delta-elimination activity role is filled by R262.

Belongs to the FPG family. Monomer. Zn(2+) is required as a cofactor.

It catalyses the reaction Hydrolysis of DNA containing ring-opened 7-methylguanine residues, releasing 2,6-diamino-4-hydroxy-5-(N-methyl)formamidopyrimidine.. The catalysed reaction is 2'-deoxyribonucleotide-(2'-deoxyribose 5'-phosphate)-2'-deoxyribonucleotide-DNA = a 3'-end 2'-deoxyribonucleotide-(2,3-dehydro-2,3-deoxyribose 5'-phosphate)-DNA + a 5'-end 5'-phospho-2'-deoxyribonucleoside-DNA + H(+). Functionally, involved in base excision repair of DNA damaged by oxidation or by mutagenic agents. Acts as a DNA glycosylase that recognizes and removes damaged bases. Has a preference for oxidized purines, such as 7,8-dihydro-8-oxoguanine (8-oxoG). Has AP (apurinic/apyrimidinic) lyase activity and introduces nicks in the DNA strand. Cleaves the DNA backbone by beta-delta elimination to generate a single-strand break at the site of the removed base with both 3'- and 5'-phosphates. The chain is Formamidopyrimidine-DNA glycosylase from Chloroflexus aggregans (strain MD-66 / DSM 9485).